We begin with the raw amino-acid sequence, 570 residues long: Probable metalloreductase AIM14 (570 aa).

7 helical membrane-spanning segments follow: residues Ile-21–Leu-41, Ala-70–Leu-90, Leu-101–Arg-118, Ile-142–Asp-162, Phe-177–Met-197, Leu-204–Ser-224, and Phe-230–Phe-250. The Ferric oxidoreductase domain occupies Leu-101–Leu-219. Residues Phe-250 to Pro-388 form the FAD-binding FR-type domain. A compositionally biased stretch (polar residues) spans Ser-481–Asn-505. The disordered stretch occupies residues Ser-481–Ser-507.

This sequence belongs to the ferric reductase (FRE) family. AIM14 subfamily. As to quaternary structure, interacts with ribosomes.

The protein localises to the membrane. Functionally, probable cell surface metalloreductase. May be involved in iron or copper homeostasis. The protein is Probable metalloreductase AIM14 (AIM14) of Saccharomyces cerevisiae (strain YJM789) (Baker's yeast).